The chain runs to 285 residues: Small ribosomal subunit biogenesis GTPase RsgA (285 aa).

Residues 61–215 enclose the CP-type G domain; the sequence is KNQLIRPKVA…IIDSPGFSSF (155 aa). GTP contacts are provided by residues 110 to 113 and 159 to 167; these read TKID and GQTGVGKTS. 4 residues coordinate Zn(2+): C239, C244, H246, and C254.

This sequence belongs to the TRAFAC class YlqF/YawG GTPase family. RsgA subfamily. Monomer. Associates with 30S ribosomal subunit, binds 16S rRNA. Zn(2+) is required as a cofactor.

The protein resides in the cytoplasm. Its function is as follows. One of several proteins that assist in the late maturation steps of the functional core of the 30S ribosomal subunit. Helps release RbfA from mature subunits. May play a role in the assembly of ribosomal proteins into the subunit. Circularly permuted GTPase that catalyzes slow GTP hydrolysis, GTPase activity is stimulated by the 30S ribosomal subunit. This chain is Small ribosomal subunit biogenesis GTPase RsgA, found in Mesomycoplasma hyopneumoniae (strain 7448) (Mycoplasma hyopneumoniae).